A 377-amino-acid chain; its full sequence is 23S rRNA (uracil(747)-C(5))-methyltransferase RlmC (377 aa).

[4Fe-4S] cluster-binding residues include Cys3, Cys11, Cys14, and Cys87. Residues Gln212, Phe241, Glu262, and Asn307 each contribute to the S-adenosyl-L-methionine site. Catalysis depends on Cys334, which acts as the Nucleophile.

The protein belongs to the class I-like SAM-binding methyltransferase superfamily. RNA M5U methyltransferase family. RlmC subfamily.

It catalyses the reaction uridine(747) in 23S rRNA + S-adenosyl-L-methionine = 5-methyluridine(747) in 23S rRNA + S-adenosyl-L-homocysteine + H(+). Catalyzes the formation of 5-methyl-uridine at position 747 (m5U747) in 23S rRNA. The chain is 23S rRNA (uracil(747)-C(5))-methyltransferase RlmC from Photorhabdus laumondii subsp. laumondii (strain DSM 15139 / CIP 105565 / TT01) (Photorhabdus luminescens subsp. laumondii).